The following is a 289-amino-acid chain: Bifunctional protein FolD (289 aa).

NADP(+) is bound by residues Gly-165 to Ser-167 and Ser-190.

This sequence belongs to the tetrahydrofolate dehydrogenase/cyclohydrolase family. Homodimer.

The catalysed reaction is (6R)-5,10-methylene-5,6,7,8-tetrahydrofolate + NADP(+) = (6R)-5,10-methenyltetrahydrofolate + NADPH. It carries out the reaction (6R)-5,10-methenyltetrahydrofolate + H2O = (6R)-10-formyltetrahydrofolate + H(+). It participates in one-carbon metabolism; tetrahydrofolate interconversion. Functionally, catalyzes the oxidation of 5,10-methylenetetrahydrofolate to 5,10-methenyltetrahydrofolate and then the hydrolysis of 5,10-methenyltetrahydrofolate to 10-formyltetrahydrofolate. In Ralstonia pickettii (strain 12J), this protein is Bifunctional protein FolD.